The following is a 192-amino-acid chain: Phosphoheptose isomerase (192 aa).

The 158-residue stretch at 35–192 (LIETLENQGK…CIERHFANKN (158 aa)) folds into the SIS domain. 50–52 (NGG) provides a ligand contact to substrate. 2 residues coordinate Zn(2+): H59 and E63. Substrate is bound by residues E63, 92-93 (ND), 118-120 (STS), S123, and Q170. 2 residues coordinate Zn(2+): Q170 and H178.

The protein belongs to the SIS family. GmhA subfamily. As to quaternary structure, homotetramer. The cofactor is Zn(2+).

The protein localises to the cytoplasm. The enzyme catalyses 2 D-sedoheptulose 7-phosphate = D-glycero-alpha-D-manno-heptose 7-phosphate + D-glycero-beta-D-manno-heptose 7-phosphate. Its pathway is carbohydrate biosynthesis; D-glycero-D-manno-heptose 7-phosphate biosynthesis; D-glycero-alpha-D-manno-heptose 7-phosphate and D-glycero-beta-D-manno-heptose 7-phosphate from sedoheptulose 7-phosphate: step 1/1. Functionally, catalyzes the isomerization of sedoheptulose 7-phosphate in D-glycero-D-manno-heptose 7-phosphate. The protein is Phosphoheptose isomerase of Helicobacter pylori (strain Shi470).